The following is a 315-amino-acid chain: Acetyl-coenzyme A carboxylase carboxyl transferase subunit alpha (315 aa).

Residues 32–289 (EIDMLEASLE…KEAFTKQLSE (258 aa)) enclose the CoA carboxyltransferase C-terminal domain.

It belongs to the AccA family. Acetyl-CoA carboxylase is a heterohexamer composed of biotin carboxyl carrier protein (AccB), biotin carboxylase (AccC) and two subunits each of ACCase subunit alpha (AccA) and ACCase subunit beta (AccD).

It is found in the cytoplasm. The catalysed reaction is N(6)-carboxybiotinyl-L-lysyl-[protein] + acetyl-CoA = N(6)-biotinyl-L-lysyl-[protein] + malonyl-CoA. It functions in the pathway lipid metabolism; malonyl-CoA biosynthesis; malonyl-CoA from acetyl-CoA: step 1/1. Functionally, component of the acetyl coenzyme A carboxylase (ACC) complex. First, biotin carboxylase catalyzes the carboxylation of biotin on its carrier protein (BCCP) and then the CO(2) group is transferred by the carboxyltransferase to acetyl-CoA to form malonyl-CoA. This is Acetyl-coenzyme A carboxylase carboxyl transferase subunit alpha from Staphylococcus carnosus (strain TM300).